Here is a 356-residue protein sequence, read N- to C-terminus: Sorbitol dehydrogenase (356 aa).

Cys44 provides a ligand contact to Zn(2+). A substrate-binding site is contributed by Tyr50. His69 and Glu70 together coordinate Zn(2+). Residue Glu155 coordinates substrate. Residues Ile183, Asp203, and Arg208 each contribute to the NAD(+) site. Residues Ser210 and Ser224 each carry the phosphoserine modification. NAD(+) is bound by residues Val272–Leu274 and Val296–Arg298. Substrate contacts are provided by Arg298 and Tyr299.

It belongs to the zinc-containing alcohol dehydrogenase family. In terms of assembly, homotetramer. It depends on Zn(2+) as a cofactor. In terms of tissue distribution, expressed in lens.

Its subcellular location is the mitochondrion membrane. It localises to the cell projection. It is found in the cilium. The protein localises to the flagellum. The enzyme catalyses xylitol + NAD(+) = D-xylulose + NADH + H(+). The catalysed reaction is keto-D-fructose + NADH + H(+) = D-sorbitol + NAD(+). It catalyses the reaction L-iditol + NAD(+) = keto-L-sorbose + NADH + H(+). Inhibited in vitro by metal chelators such as EDTA and 1,10-phenanthroline. Functionally, polyol dehydrogenase that catalyzes the reversible NAD(+)-dependent oxidation of various sugar alcohols. Is mostly active with xylitol, D-sorbitol (D-glucitol) and L-iditol as substrates, leading to the C2-oxidized products D-xylulose, D-fructose and L-sorbose, respectively. Is a key enzyme in the polyol pathway that interconverts glucose and fructose via sorbitol, which constitutes an important alternate route for glucose metabolism. May play a role in sperm motility by using sorbitol as an alternative energy source for sperm motility. Cannot use NADP(+) as the electron acceptor. Has no activity on ethanol, methanol, glycerol, galactitol and fructose 6-phosphate. This Bos taurus (Bovine) protein is Sorbitol dehydrogenase (SORD).